The following is a 556-amino-acid chain: Glutamine--tRNA ligase (556 aa).

The short motif at 34–44 (PEPNGYLHIGH) is the 'HIGH' region element. Residues 35–37 (EPN) and 41–47 (HIGHAKS) contribute to the ATP site. The L-glutamine site is built by Asp-67 and Tyr-212. ATP contacts are provided by residues Thr-231, 261–262 (RL), and 269–271 (MSK). Positions 268-272 (IMSKR) match the 'KMSKS' region motif.

It belongs to the class-I aminoacyl-tRNA synthetase family. In terms of assembly, monomer.

It localises to the cytoplasm. The catalysed reaction is tRNA(Gln) + L-glutamine + ATP = L-glutaminyl-tRNA(Gln) + AMP + diphosphate. This is Glutamine--tRNA ligase from Sodalis glossinidius (strain morsitans).